A 277-amino-acid chain; its full sequence is Ribosomal protein L11 methyltransferase (277 aa).

Residues threonine 130, glycine 151, aspartate 172, and asparagine 213 each coordinate S-adenosyl-L-methionine.

Belongs to the methyltransferase superfamily. PrmA family.

The protein localises to the cytoplasm. The catalysed reaction is L-lysyl-[protein] + 3 S-adenosyl-L-methionine = N(6),N(6),N(6)-trimethyl-L-lysyl-[protein] + 3 S-adenosyl-L-homocysteine + 3 H(+). Its function is as follows. Methylates ribosomal protein L11. This chain is Ribosomal protein L11 methyltransferase, found in Campylobacter concisus (strain 13826).